The chain runs to 352 residues: Phosphoribosylformylglycinamidine cyclo-ligase (352 aa).

Belongs to the AIR synthase family.

It localises to the cytoplasm. It carries out the reaction 2-formamido-N(1)-(5-O-phospho-beta-D-ribosyl)acetamidine + ATP = 5-amino-1-(5-phospho-beta-D-ribosyl)imidazole + ADP + phosphate + H(+). The protein operates within purine metabolism; IMP biosynthesis via de novo pathway; 5-amino-1-(5-phospho-D-ribosyl)imidazole from N(2)-formyl-N(1)-(5-phospho-D-ribosyl)glycinamide: step 2/2. The protein is Phosphoribosylformylglycinamidine cyclo-ligase of Ectopseudomonas mendocina (strain ymp) (Pseudomonas mendocina).